Consider the following 277-residue polypeptide: 4-hydroxy-tetrahydrodipicolinate reductase (277 aa).

9–14 (GATGRM) is a binding site for NAD(+). Lys-37 serves as a coordination point for NADP(+). Residue 75-77 (GTS) coordinates NAD(+). Residue His-132 is the Proton donor/acceptor of the active site. The Proton donor role is filled by Lys-136. A (S)-2,3,4,5-tetrahydrodipicolinate-binding site is contributed by 142-143 (GT). Disordered regions lie at residues 154–173 (ARGA…ARGQ) and 247–277 (ERAA…VTSA). Residues 250-265 (AQAAAGDAPSGPVDDG) show a composition bias toward low complexity.

Belongs to the DapB family.

It localises to the cytoplasm. It carries out the reaction (S)-2,3,4,5-tetrahydrodipicolinate + NAD(+) + H2O = (2S,4S)-4-hydroxy-2,3,4,5-tetrahydrodipicolinate + NADH + H(+). The enzyme catalyses (S)-2,3,4,5-tetrahydrodipicolinate + NADP(+) + H2O = (2S,4S)-4-hydroxy-2,3,4,5-tetrahydrodipicolinate + NADPH + H(+). Its pathway is amino-acid biosynthesis; L-lysine biosynthesis via DAP pathway; (S)-tetrahydrodipicolinate from L-aspartate: step 4/4. Catalyzes the conversion of 4-hydroxy-tetrahydrodipicolinate (HTPA) to tetrahydrodipicolinate. The chain is 4-hydroxy-tetrahydrodipicolinate reductase from Clavibacter michiganensis subsp. michiganensis (strain NCPPB 382).